The following is a 1498-amino-acid chain: Golgin subfamily A member 3 (1498 aa).

Position 1 is an N-acetylmethionine (methionine 1). The interval 1–118 (MDGASAEQDG…GTSAEGSVRK (118 aa)) is disordered. Serine 18 carries the phosphoserine modification. Positions 27–36 (PLKPPGPLVP) are enriched in pro residues. Serine 57 bears the Phosphoserine mark. Residues 71 to 81 (PTPPFPDPPSS) are compositionally biased toward pro residues. The segment at 121 to 141 (LQSLRLSLPMQETQLCSTDSP) is interaction with GOPC. Disordered regions lie at residues 166–195 (RVKR…MLNP) and 216–325 (SVPR…SAST). A golgi-targeting domain region spans residues 172 to 257 (ERSSQPATKT…DYRTEDSNAG (86 aa)). Composition is skewed to polar residues over residues 173-184 (RSSQPATKTRLF) and 269-291 (TKGS…SLSP). At serine 272 the chain carries Phosphoserine. Residues 315–324 (SDSSSYSSAS) show a composition bias toward low complexity. 3 positions are modified to phosphoserine: serine 385, serine 389, and serine 465. A coiled-coil region spans residues 394–1459 (VSLESSAAET…ALTVHESLSS (1066 aa)). A compositionally biased stretch (basic and acidic residues) spans 789–801 (KEELDRGARRLEE). 4 disordered regions span residues 789–809 (KEEL…TSET), 974–993 (QKQK…KEMK), 1376–1400 (RGAA…PIKI), and 1440–1498 (DSLQ…GPGE). At serine 983 the chain carries Phosphoserine. A compositionally biased stretch (basic and acidic residues) spans 1376-1387 (RGAAKTRKEPKG). Serine 1392 carries the phosphoserine modification. Residues 1440–1452 (DSLQRQMEEHALT) show a composition bias toward basic and acidic residues.

As to quaternary structure, homodimer. Interacts with GOLGA7. Isoform 1 interacts with GOPC while isoform 3 does not. Post-translationally, cleaved by caspases in apoptotic cells. In terms of tissue distribution, expressed in all tissues tested. Expressed in liver, testis, lung, heart, salivary gland and kidney.

The protein resides in the cytoplasm. The protein localises to the golgi apparatus. It localises to the golgi stack membrane. Golgi auto-antigen; probably involved in maintaining Golgi structure. The sequence is that of Golgin subfamily A member 3 (GOLGA3) from Homo sapiens (Human).